The sequence spans 108 residues: Protein YcgL (108 aa).

A YcgL domain is found at 12-96; the sequence is MFCVIYRSSK…SPEDLLKQHL (85 aa).

In Shigella dysenteriae serotype 1 (strain Sd197), this protein is Protein YcgL.